Reading from the N-terminus, the 1187-residue chain is BAI1-associated protein 3 (1187 aa).

The segment at S55–P81 is disordered. The 160-residue stretch at S176 to A335 folds into the C2 1 domain. D211, D217, D295, and D297 together coordinate Ca(2+). The MHD1 domain occupies F663–L784. Residues D888–F996 form the MHD2 domain. The 127-residue stretch at R1010–G1136 folds into the C2 2 domain. L1040, D1041, D1047, D1105, D1107, S1110, and D1113 together coordinate Ca(2+).

This sequence belongs to the unc-13 family. As to quaternary structure, interacts with ADGRB1; this interaction is direct. Interacts with endosomal SNARE proteins VAMP3, VAMP4, STX6 and STX16; this interaction is increased in the presence of calcium. Ca(2+) serves as cofactor. As to expression, predominantly expressed in brain. Also expressed in nonneural tissues such as breast and testes epithelium.

The protein resides in the cytoplasm. It is found in the cytosol. It localises to the recycling endosome membrane. The protein localises to the late endosome membrane. Its subcellular location is the golgi apparatus. The protein resides in the trans-Golgi network membrane. It is found in the cell membrane. Functions in endosome to Golgi retrograde transport. In response to calcium influx, may interact with SNARE fusion receptors and membrane phospholipids to mediate endosome fusion with the trans-Golgi network. By promoting the recycling of secretory vesicle transmembrane proteins, it indirectly controls dense-core secretory vesicle biogenesis, maturation and their ability to mediate the constitutive and regulated secretion of neurotransmitters and hormones. May regulate behavior and food intake by controlling calcium-stimulated exocytosis of neurotransmitters including NPY and serotonin and hormones like insulin. Proposed to play a role in hypothalamic neuronal firing by modulating gamma-aminobutyric acid (GABA)ergic inhibitory neurotransmission. The chain is BAI1-associated protein 3 from Homo sapiens (Human).